The following is a 320-amino-acid chain: Aspartate carbamoyltransferase catalytic subunit (320 aa).

Residues arginine 58 and threonine 59 each contribute to the carbamoyl phosphate site. Position 86 (lysine 86) interacts with L-aspartate. The carbamoyl phosphate site is built by arginine 108, histidine 136, and glutamine 139. Residues arginine 169 and arginine 223 each coordinate L-aspartate. 2 residues coordinate carbamoyl phosphate: glycine 264 and proline 265.

It belongs to the aspartate/ornithine carbamoyltransferase superfamily. ATCase family. As to quaternary structure, heterododecamer (2C3:3R2) of six catalytic PyrB chains organized as two trimers (C3), and six regulatory PyrI chains organized as three dimers (R2).

The catalysed reaction is carbamoyl phosphate + L-aspartate = N-carbamoyl-L-aspartate + phosphate + H(+). The protein operates within pyrimidine metabolism; UMP biosynthesis via de novo pathway; (S)-dihydroorotate from bicarbonate: step 2/3. Functionally, catalyzes the condensation of carbamoyl phosphate and aspartate to form carbamoyl aspartate and inorganic phosphate, the committed step in the de novo pyrimidine nucleotide biosynthesis pathway. This Cereibacter sphaeroides (strain ATCC 17029 / ATH 2.4.9) (Rhodobacter sphaeroides) protein is Aspartate carbamoyltransferase catalytic subunit.